Here is a 194-residue protein sequence, read N- to C-terminus: Bis(5'-nucleosyl)-tetraphosphatase, symmetrical (194 aa).

The region spanning 18–132 (RYNHSLRVAE…IFIADYIEPG (115 aa)) is the HD domain. Residue H21 participates in ADP binding. Fe cation is bound by residues H21, H50, and D51. Residues 51–54 (DFCK), H83, 109–110 (HT), D127, R133, and 172–177 (TVYNKT) each bind ADP. D127 provides a ligand contact to Fe cation.

This sequence belongs to the Ap4A hydrolase YqeK family. Homodimer.

It carries out the reaction P(1),P(4)-bis(5'-adenosyl) tetraphosphate + H2O = 2 ADP + 2 H(+). Its activity is regulated as follows. Inhibited by EDTA. Its function is as follows. Hydrolyzes diadenosine 5',5'''-P1,P4-tetraphosphate (Ap4A) to yield ADP. Can also hydrolyze Ap3A, Ap5A, Ap4G, Ap4U and Gp4G, always releasing ADP or GDP as one of the products, but it exhibits a marked preference for Ap4A, which is mainly exerted at the substrate affinity level. This chain is Bis(5'-nucleosyl)-tetraphosphatase, symmetrical, found in Staphylococcus aureus (strain NCTC 8325 / PS 47).